The following is a 248-amino-acid chain: 14-3-3 protein homolog 2 (248 aa).

The protein belongs to the 14-3-3 family.

This is 14-3-3 protein homolog 2 from Echinococcus granulosus (Hydatid tapeworm).